The following is a 615-amino-acid chain: MSKKFAHTQEELEKLSLKELENLAASMREKIIQVVSKNGGHLSSNLGAVELSIAMHLVFDAKKDPFIFDVSHQSYTHKLLSGKEEIFDTLRQINGLSGYTKPSEGDYFVAGHSSTSISLAVGACKAIALKGEKRIPVALIGDGALSAGMVYEALNELGDSKFPCVILLNDNEMSISKPIGAISKYLSQAMATQFYQSFKKRIAKMLDILPNSATYMAKRFEESFKLITPGLLFEELGLEYIGPIDGHNLGEIISALKQAKAIQKPCVIHAQTVKGKGYALAEGKHAKWHGVGAFDIDSGESVKKNDAKKSATEIFSKNLLDLASKYENIVGVTAAMPSGTGLDKLIEKYPNRFWDVAIAEQHAVTSMAAMAKEGFKPFIAIYSTFLQRAYDQVIHDCAIMNLNVVFAMDRAGIVGEDGETHQGVFDLSFLAPLPNFTLLAPRDEQMMHNIMEYAYLHQGPIAFRYPRGSFILDEEFNPCEIKFGKAQWLVKNSSEIAFLGYGQGVAKAWQVLRALQEMNNNANLIDLIFAKPLDEELLCELAKKSKIWFIFSENVKIGGIESLINNFLQKYDLHVKVISFEYEDKFIEHGKTSEVEKNLEKDINSLLTKVLKFHH.

Thiamine diphosphate-binding positions include His72 and 111–113; that span reads GHS. Asp142 serves as a coordination point for Mg(2+). Thiamine diphosphate-binding positions include 143–144, Asn171, Tyr278, and Glu360; that span reads GA. Asn171 lines the Mg(2+) pocket.

This sequence belongs to the transketolase family. DXPS subfamily. As to quaternary structure, homodimer. The cofactor is Mg(2+). It depends on thiamine diphosphate as a cofactor.

It carries out the reaction D-glyceraldehyde 3-phosphate + pyruvate + H(+) = 1-deoxy-D-xylulose 5-phosphate + CO2. It participates in metabolic intermediate biosynthesis; 1-deoxy-D-xylulose 5-phosphate biosynthesis; 1-deoxy-D-xylulose 5-phosphate from D-glyceraldehyde 3-phosphate and pyruvate: step 1/1. In terms of biological role, catalyzes the acyloin condensation reaction between C atoms 2 and 3 of pyruvate and glyceraldehyde 3-phosphate to yield 1-deoxy-D-xylulose-5-phosphate (DXP). The polypeptide is 1-deoxy-D-xylulose-5-phosphate synthase (Campylobacter jejuni subsp. doylei (strain ATCC BAA-1458 / RM4099 / 269.97)).